The primary structure comprises 782 residues: Coiled-coil alpha-helical rod protein 1 (782 aa).

2 stretches are compositionally biased toward basic and acidic residues: residues 62-74 (ERDV…EPGR) and 208-218 (ETRRAGEAKEL). Disordered stretches follow at residues 62-82 (ERDV…WGLE) and 182-218 (LTQA…AKEL). 3 coiled-coil regions span residues 82-314 (EGSQ…ELTR), 344-437 (LMVQ…NAVS), and 498-691 (VADV…QQEG).

It localises to the cytoplasm. Its subcellular location is the nucleus. May be a regulator of keratinocyte proliferation or differentiation. The chain is Coiled-coil alpha-helical rod protein 1 (CCHCR1) from Pan paniscus (Pygmy chimpanzee).